Consider the following 212-residue polypeptide: MQLFHLCLIISCSCPTVQASKLCLGWLLGMDIDPYKEFGASVELLSFLPSDFFPSVRDLLDTASALYREALESPEHCSPNHTALRQAVLCWGELMTGCSWVGNNLEDPASRELVVNYVNTNMGLKIRQLLWFHISCLTFGRETVLEYLVSFGVWIRTPPAYRPPNAPILSTLPETTVVRRRGRSPRRRTPSPRRRRSQSPRRRRSQSPASQC.

A signal peptide spans 1-19 (MQLFHLCLIISCSCPTVQA). An HBEAG region spans residues 25–27 (GWL). Positions 165–212 (NAPILSTLPETTVVRRRGRSPRRRTPSPRRRRSQSPRRRRSQSPASQC) are disordered. Over residues 178–205 (VRRRGRSPRRRTPSPRRRRSQSPRRRRS) the composition is skewed to basic residues. The 1; half-length repeat unit spans residues 184–190 (SPRRRTP). Residues 184-206 (SPRRRTPSPRRRRSQSPRRRRSQ) are 3 X 8 AA repeats of S-P-R-R-R-R-S-Q. Positions 184–212 (SPRRRTPSPRRRRSQSPRRRRSQSPASQC) are excised as a propeptide. 2 consecutive repeat copies span residues 191–198 (SPRRRRSQ) and 199–206 (SPRRRRSQ).

The protein belongs to the orthohepadnavirus precore antigen family. As to quaternary structure, homodimerizes. Phosphorylated. In terms of processing, cleaved by host furin.

The protein localises to the secreted. The protein resides in the host nucleus. May regulate immune response to the intracellular capsid in acting as a T-cell tolerogen, by having an immunoregulatory effect which prevents destruction of infected cells by cytotoxic T-cells. This immune regulation may predispose to chronicity during perinatal infections and prevent severe liver injury during adult infections. The chain is External core antigen from Gibbon hepatitis B virus subtype ayw3q (isolate Hope) (HBVgbn).